The following is a 389-amino-acid chain: P2X purinoceptor 4a (389 aa).

Topologically, residues 1–36 are cytoplasmic; the sequence is MSESVGCCDSVSQCFFDYYTSKILIIRSKKVGTLNR. Residues 37–57 traverse the membrane as a helical segment; the sequence is FTQALVIAYVIGYVCVYNKGY. At 58–343 the chain is on the extracellular side; that stretch reads QDTDTVLSSV…NIIPTLLNMG (286 aa). Residues lysine 70 and lysine 72 each contribute to the ATP site. 2 residues coordinate CTP: lysine 70 and lysine 72. Asparagine 78 and asparagine 113 each carry an N-linked (GlcNAc...) asparagine glycan. Intrachain disulfides connect cysteine 119-cysteine 168, cysteine 129-cysteine 152, and cysteine 135-cysteine 162. Arginine 143 is a binding site for CTP. Asparagine 187 is a glycosylation site (N-linked (GlcNAc...) asparagine). 2 residues coordinate ATP: threonine 189 and leucine 191. Threonine 189 serves as a coordination point for CTP. Asparagine 213 is a glycosylation site (N-linked (GlcNAc...) asparagine). Intrachain disulfides connect cysteine 220–cysteine 230 and cysteine 264–cysteine 273. Residues asparagine 296, arginine 298, and lysine 316 each contribute to the ATP site. Asparagine 296, arginine 298, and lysine 316 together coordinate CTP. The chain crosses the membrane as a helical span at residues 344 to 364; that stretch reads AGLALLGLVNVICDWIVLTFM. Residues 365–389 lie on the Cytoplasmic side of the membrane; that stretch reads KRKQHYKEQKYTYVDDFGLLHNEDK.

Belongs to the P2X receptor family. In terms of assembly, functional P2XRs are organized as homomeric and heteromeric trimers. Forms homotrimer.

The protein resides in the cell membrane. It is found in the lysosome membrane. The catalysed reaction is K(+)(in) = K(+)(out). It catalyses the reaction Na(+)(in) = Na(+)(out). The enzyme catalyses Ca(2+)(in) = Ca(2+)(out). With respect to regulation, activated by ATP. pH-dependent and inhibited by acidic pH. Functionally, ATP-gated nonselective transmembrane cation channel permeable to potassium, sodium and calcium. CTP, but not GTP or UTP, functions as a weak affinity agonist for P2RX4. Activated by extracellularly released ATP, it plays multiple role in immunity and central nervous system physiology. Could also function as an ATP-gated cation channel of lysosomal membranes. The polypeptide is P2X purinoceptor 4a (p2rx4a) (Danio rerio (Zebrafish)).